A 122-amino-acid chain; its full sequence is Small ribosomal subunit protein uS13 (122 aa).

Residues 92–122 (HRKQLPVRGQRTHTNARTRKGKAKPIAGKKK) form a disordered region.

This sequence belongs to the universal ribosomal protein uS13 family. Part of the 30S ribosomal subunit. Forms a loose heterodimer with protein S19. Forms two bridges to the 50S subunit in the 70S ribosome.

Its function is as follows. Located at the top of the head of the 30S subunit, it contacts several helices of the 16S rRNA. In the 70S ribosome it contacts the 23S rRNA (bridge B1a) and protein L5 of the 50S subunit (bridge B1b), connecting the 2 subunits; these bridges are implicated in subunit movement. Contacts the tRNAs in the A and P-sites. This is Small ribosomal subunit protein uS13 from Methylobacterium radiotolerans (strain ATCC 27329 / DSM 1819 / JCM 2831 / NBRC 15690 / NCIMB 10815 / 0-1).